A 399-amino-acid chain; its full sequence is Immunoglobulin heavy constant gamma 1 (399 aa).

The interval 1-21 (ASTKGPSVFPLAPSSKSTSGG) is disordered. A CH1 region spans residues 1 to 98 (ASTKGPSVFP…PSNTKVDKKV (98 aa)). The Extracellular portion of the chain corresponds to 1–350 (ASTKGPSVFP…DGELDGLWTT (350 aa)). Ig-like domains follow at residues 6–99 (PSVF…KKVE), 121–220 (PSVF…KTIS), and 229–325 (PQVY…KSLS). An intrachain disulfide couples Cys27 to Cys83. The tract at residues 99 to 110 (EPKSCDKTHTCP) is hinge. Positions 111 to 223 (PCPAPELLGG…PIEKTISKAK (113 aa)) are CH2. 2 disulfide bridges follow: Cys144/Cys204 and Cys250/Cys308. Asn180 carries an N-linked (GlcNAc...) (complex) asparagine glycan. The tract at residues 224 to 330 (GQPREPQVYT…QKSLSLSPEL (107 aa)) is CH3. Residues 351-371 (ITIFITLFLLSVCYSATVTFF) form a helical membrane-spanning segment. The Cytoplasmic segment spans residues 372–399 (KVKWIFSSVVDLKQTIIPDYRNMIGQGA).

As to quaternary structure, immunoglobulins are composed of two identical heavy chains and two identical light chains; disulfide-linked. Interacts with FCGR1A; this interaction mediates IgG effector functions on monocytes. Interacts with FCGR2A and FCGR3A. Glycosylation on Asn-180 is required for interaction with Fc receptors and ability to activate the complement pathway. In terms of processing, (Microbial infection) Deglycosylation on Asn-180 by S.pyogenes EndoS or Endos2 endoglucosidases prevents interaction between immunoglobulin-gamma (IgG) and Fc receptors, impairing ability to activate the complement pathway.

It localises to the secreted. Its subcellular location is the cell membrane. Constant region of immunoglobulin heavy chains. Immunoglobulins, also known as antibodies, are membrane-bound or secreted glycoproteins produced by B lymphocytes. In the recognition phase of humoral immunity, the membrane-bound immunoglobulins serve as receptors which, upon binding of a specific antigen, trigger the clonal expansion and differentiation of B lymphocytes into immunoglobulins-secreting plasma cells. Secreted immunoglobulins mediate the effector phase of humoral immunity, which results in the elimination of bound antigens. The antigen binding site is formed by the variable domain of one heavy chain, together with that of its associated light chain. Thus, each immunoglobulin has two antigen binding sites with remarkable affinity for a particular antigen. The variable domains are assembled by a process called V-(D)-J rearrangement and can then be subjected to somatic hypermutations which, after exposure to antigen and selection, allow affinity maturation for a particular antigen. Mediates IgG effector functions on monocytes triggering ADCC of virus-infected cells. The polypeptide is Immunoglobulin heavy constant gamma 1 (Homo sapiens (Human)).